We begin with the raw amino-acid sequence, 212 residues long: Small ribosomal subunit protein uS5 (212 aa).

Positions 1–42 are disordered; it reads MPGRERRDGGRSADKNDNNKGRNDRGRNDRNNRRGRGRDDDR. Positions 45-108 constitute an S5 DRBM domain; sequence YIERVVTINR…EEARKNFFRV (64 aa).

The protein belongs to the universal ribosomal protein uS5 family. In terms of assembly, part of the 30S ribosomal subunit. Contacts proteins S4 and S8.

Functionally, with S4 and S12 plays an important role in translational accuracy. In terms of biological role, located at the back of the 30S subunit body where it stabilizes the conformation of the head with respect to the body. This Corynebacterium kroppenstedtii (strain DSM 44385 / JCM 11950 / CIP 105744 / CCUG 35717) protein is Small ribosomal subunit protein uS5.